Here is a 438-residue protein sequence, read N- to C-terminus: Flagellum-specific ATP synthase (438 aa).

Residues 119–139 (GLSPVSTEQSPPNPMKRPPIR) form a disordered region. Position 165-172 (165-172 (AGSGVGKS)) interacts with ATP.

It belongs to the ATPase alpha/beta chains family.

The protein resides in the cytoplasm. The enzyme catalyses ATP + H2O + 4 H(+)(in) = ADP + phosphate + 5 H(+)(out). Functionally, probable catalytic subunit of a protein translocase for flagellum-specific export, or a proton translocase involved in local circuits at the flagellum. This Bacillus subtilis (strain 168) protein is Flagellum-specific ATP synthase (fliI).